The chain runs to 357 residues: Probable cinnamyl alcohol dehydrogenase 2 (357 aa).

A Zn(2+)-binding site is contributed by cysteine 47. Serine 49 is an NADP(+) binding site. Histidine 69, glutamate 70, cysteine 100, cysteine 103, cysteine 106, cysteine 114, and cysteine 163 together coordinate Zn(2+). Residues threonine 167, 188-193 (GLGGVG), 211-216 (SSSNKK), threonine 251, glycine 275, and 298-300 (SFI) each bind NADP(+).

This sequence belongs to the zinc-containing alcohol dehydrogenase family. As to quaternary structure, homodimer. The cofactor is Zn(2+). Post-translationally, the N-terminus is blocked.

It carries out the reaction (E)-cinnamyl alcohol + NADP(+) = (E)-cinnamaldehyde + NADPH + H(+). The enzyme catalyses (E)-coniferol + NADP(+) = (E)-coniferaldehyde + NADPH + H(+). It catalyses the reaction (E)-sinapyl alcohol + NADP(+) = (E)-sinapaldehyde + NADPH + H(+). The catalysed reaction is (E)-4-coumaroyl alcohol + NADP(+) = (E)-4-coumaraldehyde + NADPH + H(+). It carries out the reaction (E)-caffeyl alcohol + NADP(+) = (E)-caffeyl aldehyde + NADPH + H(+). It functions in the pathway aromatic compound metabolism; phenylpropanoid biosynthesis. In terms of biological role, involved in lignin biosynthesis. Catalyzes the final step specific for the production of lignin monomers. Catalyzes the NADPH-dependent reduction of coniferaldehyde, 5-hydroxyconiferaldehyde, sinapaldehyde, 4-coumaraldehyde and caffeyl aldehyde to their respective alcohols. In Nicotiana tabacum (Common tobacco), this protein is Probable cinnamyl alcohol dehydrogenase 2 (CAD19).